We begin with the raw amino-acid sequence, 302 residues long: 4-hydroxy-tetrahydrodipicolinate synthase (302 aa).

Position 55 (T55) interacts with pyruvate. Y144 functions as the Proton donor/acceptor in the catalytic mechanism. The active-site Schiff-base intermediate with substrate is the K172. V214 provides a ligand contact to pyruvate.

It belongs to the DapA family. In terms of assembly, homotetramer; dimer of dimers.

It is found in the cytoplasm. The enzyme catalyses L-aspartate 4-semialdehyde + pyruvate = (2S,4S)-4-hydroxy-2,3,4,5-tetrahydrodipicolinate + H2O + H(+). It participates in amino-acid biosynthesis; L-lysine biosynthesis via DAP pathway; (S)-tetrahydrodipicolinate from L-aspartate: step 3/4. Catalyzes the condensation of (S)-aspartate-beta-semialdehyde [(S)-ASA] and pyruvate to 4-hydroxy-tetrahydrodipicolinate (HTPA). This is 4-hydroxy-tetrahydrodipicolinate synthase from Prochlorococcus marinus (strain MIT 9211).